Reading from the N-terminus, the 259-residue chain is L-erythrulose-1-phosphate isomerase (259 aa).

The active-site Electrophile is H102. E174 serves as the catalytic Proton acceptor.

The protein belongs to the triosephosphate isomerase family.

It carries out the reaction L-erythrulose 1-phosphate = D-erythrulose 4-phosphate. It functions in the pathway carbohydrate metabolism. In terms of biological role, involved in catabolism of D-apiose. Catalyzes the isomerization of L-erythrulose 1-phosphate to D-erythrulose 4-phosphate. In Pectobacterium atrosepticum (strain SCRI 1043 / ATCC BAA-672) (Erwinia carotovora subsp. atroseptica), this protein is L-erythrulose-1-phosphate isomerase.